The following is a 144-amino-acid chain: D-aminoacyl-tRNA deacylase (144 aa).

Positions 136–137 (GP) match the Gly-cisPro motif, important for rejection of L-amino acids motif.

It belongs to the DTD family. Homodimer.

The protein resides in the cytoplasm. It carries out the reaction glycyl-tRNA(Ala) + H2O = tRNA(Ala) + glycine + H(+). It catalyses the reaction a D-aminoacyl-tRNA + H2O = a tRNA + a D-alpha-amino acid + H(+). An aminoacyl-tRNA editing enzyme that deacylates mischarged D-aminoacyl-tRNAs. Also deacylates mischarged glycyl-tRNA(Ala), protecting cells against glycine mischarging by AlaRS. Acts via tRNA-based rather than protein-based catalysis; rejects L-amino acids rather than detecting D-amino acids in the active site. By recycling D-aminoacyl-tRNA to D-amino acids and free tRNA molecules, this enzyme counteracts the toxicity associated with the formation of D-aminoacyl-tRNA entities in vivo and helps enforce protein L-homochirality. The protein is D-aminoacyl-tRNA deacylase of Haemophilus influenzae (strain PittEE).